A 1212-amino-acid chain; its full sequence is DNA-directed RNA polymerase subunit beta' (1212 aa).

Positions 60, 62, 75, and 78 each coordinate Zn(2+). 3 residues coordinate Mg(2+): Asp-450, Asp-452, and Asp-454. Zn(2+) is bound by residues Cys-819, Cys-893, Cys-900, and Cys-903.

Belongs to the RNA polymerase beta' chain family. The RNAP catalytic core consists of 2 alpha, 1 beta, 1 beta' and 1 omega subunit. When a sigma factor is associated with the core the holoenzyme is formed, which can initiate transcription. Mg(2+) serves as cofactor. The cofactor is Zn(2+).

It catalyses the reaction RNA(n) + a ribonucleoside 5'-triphosphate = RNA(n+1) + diphosphate. Functionally, DNA-dependent RNA polymerase catalyzes the transcription of DNA into RNA using the four ribonucleoside triphosphates as substrates. The chain is DNA-directed RNA polymerase subunit beta' from Streptococcus thermophilus (strain ATCC BAA-491 / LMD-9).